The following is a 142-amino-acid chain: Large ribosomal subunit protein uL11 (142 aa).

As to quaternary structure, part of the ribosomal stalk of the 50S ribosomal subunit. Interacts with L10 and the large rRNA to form the base of the stalk. L10 forms an elongated spine to which L12 dimers bind in a sequential fashion forming a multimeric L10(L12)X complex. In terms of processing, lys-40 is trimethylated or acetylated; other modifications may also exist.

Its function is as follows. Forms part of the ribosomal stalk which helps the ribosome interact with GTP-bound translation factors. The polypeptide is Large ribosomal subunit protein uL11 (Rhodopseudomonas palustris (strain ATCC BAA-98 / CGA009)).